The following is a 301-amino-acid chain: Pyridoxal 5'-phosphate synthase subunit PdxS (301 aa).

Residue aspartate 31 coordinates D-ribose 5-phosphate. Lysine 88 acts as the Schiff-base intermediate with D-ribose 5-phosphate in catalysis. Position 160 (glycine 160) interacts with D-ribose 5-phosphate. Residue arginine 172 participates in D-glyceraldehyde 3-phosphate binding. Residues glycine 221 and 242–243 (GS) contribute to the D-ribose 5-phosphate site. Positions 273–301 (EIAKSPGKGMKGQANETLPEEEKLQDRGI) are disordered. Positions 292–301 (EEEKLQDRGI) are enriched in basic and acidic residues.

The protein belongs to the PdxS/SNZ family. In the presence of PdxT, forms a dodecamer of heterodimers.

The enzyme catalyses aldehydo-D-ribose 5-phosphate + D-glyceraldehyde 3-phosphate + L-glutamine = pyridoxal 5'-phosphate + L-glutamate + phosphate + 3 H2O + H(+). It participates in cofactor biosynthesis; pyridoxal 5'-phosphate biosynthesis. Functionally, catalyzes the formation of pyridoxal 5'-phosphate from ribose 5-phosphate (RBP), glyceraldehyde 3-phosphate (G3P) and ammonia. The ammonia is provided by the PdxT subunit. Can also use ribulose 5-phosphate and dihydroxyacetone phosphate as substrates, resulting from enzyme-catalyzed isomerization of RBP and G3P, respectively. This is Pyridoxal 5'-phosphate synthase subunit PdxS from Natronomonas pharaonis (strain ATCC 35678 / DSM 2160 / CIP 103997 / JCM 8858 / NBRC 14720 / NCIMB 2260 / Gabara) (Halobacterium pharaonis).